Reading from the N-terminus, the 294-residue chain is Cytidine deaminase (294 aa).

CMP/dCMP-type deaminase domains lie at 48–168 (DEDA…FGPK) and 186–294 (LTGD…VLLA). 89–91 (NME) serves as a coordination point for substrate. His102 is a Zn(2+) binding site. Glu104 acts as the Proton donor in catalysis. Zn(2+)-binding residues include Cys129 and Cys132.

The protein belongs to the cytidine and deoxycytidylate deaminase family. In terms of assembly, homodimer. It depends on Zn(2+) as a cofactor.

It carries out the reaction cytidine + H2O + H(+) = uridine + NH4(+). The enzyme catalyses 2'-deoxycytidine + H2O + H(+) = 2'-deoxyuridine + NH4(+). This enzyme scavenges exogenous and endogenous cytidine and 2'-deoxycytidine for UMP synthesis. The protein is Cytidine deaminase of Escherichia coli O7:K1 (strain IAI39 / ExPEC).